The primary structure comprises 192 residues: Peptidyl-prolyl cis-trans isomerase 1 (192 aa).

Positions F25 to E188 constitute a PPIase cyclophilin-type domain.

It belongs to the cyclophilin-type PPIase family.

It carries out the reaction [protein]-peptidylproline (omega=180) = [protein]-peptidylproline (omega=0). Functionally, PPIases accelerate the folding of proteins. It catalyzes the cis-trans isomerization of proline imidic peptide bonds in oligopeptides. This is Peptidyl-prolyl cis-trans isomerase 1 (cyn-1) from Caenorhabditis elegans.